Here is a 264-residue protein sequence, read N- to C-terminus: Protein OXIDATIVE STRESS 3 LIKE 1 (264 aa).

Disordered regions lie at residues 1-76 and 178-225; these read MDCV…GPLE and TGEG…QGSF. Residues 29-43 are compositionally biased toward low complexity; the sequence is PSDSSSSPSSSASSS. The segment covering 47-56 has biased composition (basic and acidic residues); that stretch reads NSDDGEKSSE. Acidic residues predominate over residues 57 to 67; sequence DGGDDAGENEV. The span at 179–201 shows a compositional bias: low complexity; the sequence is GEGSSSGGDSSPGSSPTTSGSPP. Residues 203–212 show a composition bias toward basic residues; it reads QLHHHQHQMK.

Its subcellular location is the nucleus. Its function is as follows. Promotes slightly the tolerance to zinc (Zn) and to oxidizing chemicals (e.g. diamide). In Arabidopsis thaliana (Mouse-ear cress), this protein is Protein OXIDATIVE STRESS 3 LIKE 1.